Consider the following 215-residue polypeptide: Ribonuclease T (215 aa).

One can recognise an Exonuclease domain in the interval 20–194; it reads VVIDVETAGF…YDTERTAVLF (175 aa). 4 residues coordinate Mg(2+): Asp23, Glu25, His181, and Asp186. The Proton donor/acceptor role is filled by His181.

The protein belongs to the RNase T family. Homodimer. It depends on Mg(2+) as a cofactor.

Functionally, trims short 3' overhangs of a variety of RNA species, leaving a one or two nucleotide 3' overhang. Responsible for the end-turnover of tRNA: specifically removes the terminal AMP residue from uncharged tRNA (tRNA-C-C-A). Also appears to be involved in tRNA biosynthesis. This Citrobacter koseri (strain ATCC BAA-895 / CDC 4225-83 / SGSC4696) protein is Ribonuclease T.